The primary structure comprises 142 residues: Large ribosomal subunit protein uL11 (142 aa).

The protein belongs to the universal ribosomal protein uL11 family. Part of the ribosomal stalk of the 50S ribosomal subunit. Interacts with L10 and the large rRNA to form the base of the stalk. L10 forms an elongated spine to which L12 dimers bind in a sequential fashion forming a multimeric L10(L12)X complex. Post-translationally, one or more lysine residues are methylated.

Functionally, forms part of the ribosomal stalk which helps the ribosome interact with GTP-bound translation factors. The protein is Large ribosomal subunit protein uL11 of Colwellia psychrerythraea (strain 34H / ATCC BAA-681) (Vibrio psychroerythus).